The sequence spans 637 residues: Chaperone protein HtpG (637 aa).

Residues 1 to 348 (MAEAGQMEKH…SNDLPLNVSR (348 aa)) form an a; substrate-binding region. The segment at 349 to 565 (EILQDNKITR…DNDMSTQMAK (217 aa)) is b. Residues 566 to 637 (LMEAAGQAVP…TRLNKLMLNA (72 aa)) are c.

Belongs to the heat shock protein 90 family. In terms of assembly, homodimer.

It is found in the cytoplasm. In terms of biological role, molecular chaperone. Has ATPase activity. This Idiomarina loihiensis (strain ATCC BAA-735 / DSM 15497 / L2-TR) protein is Chaperone protein HtpG.